A 61-amino-acid polypeptide reads, in one-letter code: Japonicin-1CDYa (61 aa).

Positions 1–22 (MFTLKKSLLLLFFLGVINVSLC) are cleaved as a signal peptide. Residues 23–45 (EEERDADEEERRDDPEERDVEVE) constitute a propeptide that is removed on maturation. Cysteines 55 and 61 form a disulfide.

It belongs to the frog skin active peptide (FSAP) family. Brevinin subfamily. As to expression, expressed by the skin glands.

It is found in the secreted. Its function is as follows. Antimicrobial peptide. Has low activity against the Gram-positive bacterium S.aureus (MIC&gt;100 uM) and the Gram-negative bacterium E.coli (MIC=25 uM). Lacks hemolytic activity against human erythrocytes. This chain is Japonicin-1CDYa, found in Rana dybowskii (Dybovsky's frog).